The sequence spans 169 residues: ATP synthase subunit b (169 aa).

A helical transmembrane segment spans residues His-12–Ile-32.

The protein belongs to the ATPase B chain family. F-type ATPases have 2 components, F(1) - the catalytic core - and F(0) - the membrane proton channel. F(1) has five subunits: alpha(3), beta(3), gamma(1), delta(1), epsilon(1). F(0) has three main subunits: a(1), b(2) and c(10-14). The alpha and beta chains form an alternating ring which encloses part of the gamma chain. F(1) is attached to F(0) by a central stalk formed by the gamma and epsilon chains, while a peripheral stalk is formed by the delta and b chains.

The protein resides in the cell membrane. Its function is as follows. F(1)F(0) ATP synthase produces ATP from ADP in the presence of a proton or sodium gradient. F-type ATPases consist of two structural domains, F(1) containing the extramembraneous catalytic core and F(0) containing the membrane proton channel, linked together by a central stalk and a peripheral stalk. During catalysis, ATP synthesis in the catalytic domain of F(1) is coupled via a rotary mechanism of the central stalk subunits to proton translocation. Functionally, component of the F(0) channel, it forms part of the peripheral stalk, linking F(1) to F(0). This chain is ATP synthase subunit b, found in Lactobacillus helveticus (strain DPC 4571).